We begin with the raw amino-acid sequence, 537 residues long: CWF19-like protein 1 (537 aa).

The interval 297-323 is disordered; the sequence is KQGRKRPSTGRDTRPPHAKQPRKPPQP.

It belongs to the CWF19 family.

The protein is CWF19-like protein 1 (Cwf19l1) of Mus musculus (Mouse).